Consider the following 267-residue polypeptide: Probable membrane transporter protein MJ0441 (267 aa).

7 helical membrane passes run 10–30 (LLLL…GSLF), 31–51 (GIGG…YFGI), 55–75 (VKFA…ISIF), 87–107 (ASIT…FLVV), 158–178 (FLSG…LAMA), 185–205 (AVAI…ISYL), and 213–233 (IYNI…PIIY).

It belongs to the 4-toluene sulfonate uptake permease (TSUP) (TC 2.A.102) family.

It is found in the cell membrane. The polypeptide is Probable membrane transporter protein MJ0441 (Methanocaldococcus jannaschii (strain ATCC 43067 / DSM 2661 / JAL-1 / JCM 10045 / NBRC 100440) (Methanococcus jannaschii)).